We begin with the raw amino-acid sequence, 163 residues long: ATP synthase subunit b (163 aa).

Residues 9–29 (GLLIAQLINVVFVVWLLTTFL) form a helical membrane-spanning segment.

Belongs to the ATPase B chain family. In terms of assembly, F-type ATPases have 2 components, F(1) - the catalytic core - and F(0) - the membrane proton channel. F(1) has five subunits: alpha(3), beta(3), gamma(1), delta(1), epsilon(1). F(0) has four main subunits: a(1), b(2) and c(10-14). The alpha and beta chains form an alternating ring which encloses part of the gamma chain. F(1) is attached to F(0) by a central stalk formed by the gamma and epsilon chains, while a peripheral stalk is formed by the delta and b chains.

It is found in the cell membrane. Its function is as follows. F(1)F(0) ATP synthase produces ATP from ADP in the presence of a proton or sodium gradient. F-type ATPases consist of two structural domains, F(1) containing the extramembraneous catalytic core and F(0) containing the membrane proton channel, linked together by a central stalk and a peripheral stalk. During catalysis, ATP synthesis in the catalytic domain of F(1) is coupled via a rotary mechanism of the central stalk subunits to proton translocation. Component of the F(0) channel, it forms part of the peripheral stalk, linking F(1) to F(0). The sequence is that of ATP synthase subunit b from Roseiflexus castenholzii (strain DSM 13941 / HLO8).